Consider the following 247-residue polypeptide: Ubiquinone biosynthesis O-methyltransferase (247 aa).

S-adenosyl-L-methionine contacts are provided by Arg-40, Gly-71, Asp-92, and Met-135.

This sequence belongs to the methyltransferase superfamily. UbiG/COQ3 family.

It catalyses the reaction a 3-demethylubiquinol + S-adenosyl-L-methionine = a ubiquinol + S-adenosyl-L-homocysteine + H(+). The catalysed reaction is a 3-(all-trans-polyprenyl)benzene-1,2-diol + S-adenosyl-L-methionine = a 2-methoxy-6-(all-trans-polyprenyl)phenol + S-adenosyl-L-homocysteine + H(+). It functions in the pathway cofactor biosynthesis; ubiquinone biosynthesis. In terms of biological role, O-methyltransferase that catalyzes the 2 O-methylation steps in the ubiquinone biosynthetic pathway. This is Ubiquinone biosynthesis O-methyltransferase from Ruegeria sp. (strain TM1040) (Silicibacter sp.).